A 549-amino-acid chain; its full sequence is Cation/acetate symporter ActP (549 aa).

Transmembrane regions (helical) follow at residues 33 to 53 (WQAI…TYWA), 76 to 96 (GLAI…SALV), 103 to 123 (GLIY…LIAE), 149 to 169 (LSAC…MVGA), 183 to 203 (IAVV…GMLA), 206 to 226 (WVQI…AFMV), 262 to 282 (ISAL…PHIL), 303 to 323 (GFMG…IMLV), 355 to 375 (LFLG…VAGL), 404 to 424 (VSKI…ILFE), 428 to 448 (IAFM…PIIL), 463 to 483 (IGGW…PTIW), and 493 to 513 (IFPY…GIWF).

Belongs to the sodium:solute symporter (SSF) (TC 2.A.21) family.

It is found in the cell inner membrane. In terms of biological role, transports acetate. The polypeptide is Cation/acetate symporter ActP (Enterobacter sp. (strain 638)).